Here is a 1017-residue protein sequence, read N- to C-terminus: Dopamine dehydroxylase (1017 aa).

A signal peptide (tat-type signal) is located at residues 1-34; it reads MGNLTMSRRTFVKTAAITGAAAAAFGASTHTALA. One can recognise a 4Fe-4S Mo/W bis-MGD-type domain in the interval 45–103; the sequence is DTVAVKTCCRGCGKMECGVKVIVQNGRAIRVEGDEGAFQSMGNCCTKSQSSIQAAYHPD. [4Fe-4S] cluster contacts are provided by Cys53, Cys56, Cys61, and Cys89. The active-site Electron donor/acceptor is the Lys91.

It belongs to the prokaryotic molybdopterin-containing oxidoreductase family. [4Fe-4S] cluster serves as cofactor. The cofactor is Mo-bis(molybdopterin guanine dinucleotide). Predicted to be exported by the Tat system. The position of the signal peptide cleavage has not been experimentally proven.

It catalyses the reaction dopamine + AH2 = 3-tyramine + A + H2O. Involved in drug metabolism, as part of an interspecies gut bacterial pathway for Levodopa (L-dopa) metabolism, acting on dopamine produced by Enterecoccus L-dopa decarboxylase. Removes the para hydroxyl group of dopamine to produce m-tyramine (3-tyramine). It is possible that dopamine dehydroxylation influences the multiple side effects of L-dopa administration linked to dopamine production in the treatment of Parkinson's disease. The protein is Dopamine dehydroxylase of Eggerthella lenta (Eubacterium lentum).